The following is a 300-amino-acid chain: PTB domain-containing engulfment adapter protein 1 (300 aa).

One can recognise a PID domain in the interval 21 to 176 (AKHFIPYNAK…GGLQKRIQDL (156 aa)). A coiled-coil region spans residues 160–199 (VETRKQIGGLQKRIQDLETENVELKKQLQVLEEQLMIAQV).

It belongs to the ced-6 family.

Its subcellular location is the cytoplasm. Functionally, may function as an adapter protein. Required for efficient phagocytosis of apoptotic cells. May play a role in the internalization and endosomal trafficking of various lrp1 ligands. The sequence is that of PTB domain-containing engulfment adapter protein 1 (gulp1) from Danio rerio (Zebrafish).